Consider the following 155-residue polypeptide: Cytochrome c-type biogenesis protein CcmE (155 aa).

Residues 1–8 (MNPRRKKR) lie on the Cytoplasmic side of the membrane. A helical; Signal-anchor for type II membrane protein transmembrane segment spans residues 9-29 (LLITSLLAVALSLAVGLVLFA). Residues 30-155 (LQQNIDLFYT…GMDNFKANNK (126 aa)) lie on the Periplasmic side of the membrane. Heme is bound by residues histidine 131 and tyrosine 135.

The protein belongs to the CcmE/CycJ family.

It localises to the cell inner membrane. Functionally, heme chaperone required for the biogenesis of c-type cytochromes. Transiently binds heme delivered by CcmC and transfers the heme to apo-cytochromes in a process facilitated by CcmF and CcmH. The chain is Cytochrome c-type biogenesis protein CcmE from Psychromonas ingrahamii (strain DSM 17664 / CCUG 51855 / 37).